The following is a 450-amino-acid chain: Protein tailless (450 aa).

The nuclear receptor DNA-binding region spans 31–108; sequence HVPCKVCRDH…VGMNKDAVQH (78 aa). NR C4-type zinc fingers lie at residues 34–54 and 70–96; these read CKVCRDHSSGKHYGIYACDGC and CKSQKQGLCVVDKTHRNQCRACRLRKC. An NR LBD domain is found at 187-448; sequence VPRVPHHPVH…RLISDMYSQR (262 aa).

Belongs to the nuclear hormone receptor family. NR2 subfamily. Monomer.

It is found in the nucleus. Functionally, orphan receptor that binds DNA as a monomer to hormone response elements (HRE) containing an extended core motif half-site sequence 5'-AAGTCA-3' in which the 5' flanking nucleotides participate in determining receptor specificity. This receptor binds to the consensus sequence [AG][AG]AAGTCAA. Plays a key role in the establishment of non-metameric domains at the anterior and posterior poles of the embryo. It may also play a role in the nervous system. The maternal terminal pathway activates the tll gene in the termini; TLL activity then represses segmentation and activates terminal-specific genes in these domains. Involved in the regulation of early eye development. In the embryonic visual system anlage drives cells to optic lobe as opposed to Bolwig's organ fate. The sequence is that of Protein tailless (tll) from Drosophila virilis (Fruit fly).